Reading from the N-terminus, the 351-residue chain is Maleylacetate reductase (351 aa).

This sequence belongs to the iron-containing alcohol dehydrogenase family. In terms of assembly, homodimer.

The enzyme catalyses 3-oxoadipate + NAD(+) = maleylacetate + NADH + H(+). Its pathway is aromatic compound metabolism. Its function is as follows. Involved in the gamma-resorcylate (2,6-dihydroxybenzoate) catabolism. Catalyzes the reduction of maleylacetate to 3-oxoadipate. In Rhizobium sp. (strain MTP-10005), this protein is Maleylacetate reductase.